The chain runs to 137 residues: Small ribosomal subunit protein uS12 (137 aa).

Positions 1–57 (MPTINQLVRKPRKSKVEKSKSPALNVGYNSRKKVQTNVSSPQKRGVATRVGTMTPKK) are disordered. Position 102 is a 3-methylthioaspartic acid (Asp102).

The protein belongs to the universal ribosomal protein uS12 family. As to quaternary structure, part of the 30S ribosomal subunit. Contacts proteins S8 and S17. May interact with IF1 in the 30S initiation complex.

In terms of biological role, with S4 and S5 plays an important role in translational accuracy. Its function is as follows. Interacts with and stabilizes bases of the 16S rRNA that are involved in tRNA selection in the A site and with the mRNA backbone. Located at the interface of the 30S and 50S subunits, it traverses the body of the 30S subunit contacting proteins on the other side and probably holding the rRNA structure together. The combined cluster of proteins S8, S12 and S17 appears to hold together the shoulder and platform of the 30S subunit. This Streptococcus suis (strain 98HAH33) protein is Small ribosomal subunit protein uS12.